Here is a 144-residue protein sequence, read N- to C-terminus: Large ribosomal subunit protein uL24 (144 aa).

Positions 1–22 are disordered; that stretch reads MKFNKMVSSDRGKNRKRHFNAP. The segment covering 13–22 has biased composition (basic residues); that stretch reads KNRKRHFNAP.

The protein belongs to the universal ribosomal protein uL24 family.

This Littorina littorea (Common periwinkle) protein is Large ribosomal subunit protein uL24 (RPL26).